The primary structure comprises 883 residues: Phosphoenolpyruvate carboxylase (883 aa).

Catalysis depends on residues His138 and Lys546.

It belongs to the PEPCase type 1 family. The cofactor is Mg(2+).

The enzyme catalyses oxaloacetate + phosphate = phosphoenolpyruvate + hydrogencarbonate. Functionally, forms oxaloacetate, a four-carbon dicarboxylic acid source for the tricarboxylic acid cycle. The chain is Phosphoenolpyruvate carboxylase from Shigella flexneri.